Here is a 275-residue protein sequence, read N- to C-terminus: Exosome complex component Rrp42 (275 aa).

It belongs to the RNase PH family. Rrp42 subfamily. Component of the archaeal exosome complex. Forms a hexameric ring-like arrangement composed of 3 Rrp41-Rrp42 heterodimers. The hexameric ring associates with a trimer of Rrp4 and/or Csl4 subunits.

Its subcellular location is the cytoplasm. In terms of biological role, non-catalytic component of the exosome, which is a complex involved in RNA degradation. Contributes to the structuring of the Rrp41 active site. In Saccharolobus islandicus (strain L.S.2.15 / Lassen #1) (Sulfolobus islandicus), this protein is Exosome complex component Rrp42.